Here is a 292-residue protein sequence, read N- to C-terminus: Elongation factor Ts (292 aa).

An involved in Mg(2+) ion dislocation from EF-Tu region spans residues 79–82; the sequence is TDFV.

The protein belongs to the EF-Ts family.

The protein localises to the cytoplasm. Functionally, associates with the EF-Tu.GDP complex and induces the exchange of GDP to GTP. It remains bound to the aminoacyl-tRNA.EF-Tu.GTP complex up to the GTP hydrolysis stage on the ribosome. The polypeptide is Elongation factor Ts (Xanthomonas campestris pv. campestris (strain B100)).